A 198-amino-acid chain; its full sequence is MEKFNTHTGLVVPLDVANVDTDQIIPKQFLQKTERVGFGVHLFHDSRYLDHDGTQENPDFVINKPEYKGASILLAGENFGCGSSREHAPWALQEYGFKVIIASSFADIFYGNCINVGLLPIKLTEAEIEQLFKLSPNAQLTLTVDLPNNVVTCGELSFKFSLNEFQQYSLENGVDSVGWTLNKLDTIKAFEEKMPAWQ.

Belongs to the LeuD family. LeuD type 1 subfamily. In terms of assembly, heterodimer of LeuC and LeuD.

It catalyses the reaction (2R,3S)-3-isopropylmalate = (2S)-2-isopropylmalate. It participates in amino-acid biosynthesis; L-leucine biosynthesis; L-leucine from 3-methyl-2-oxobutanoate: step 2/4. Catalyzes the isomerization between 2-isopropylmalate and 3-isopropylmalate, via the formation of 2-isopropylmaleate. The polypeptide is 3-isopropylmalate dehydratase small subunit (Colwellia psychrerythraea (strain 34H / ATCC BAA-681) (Vibrio psychroerythus)).